We begin with the raw amino-acid sequence, 480 residues long: MNRPSQISQDVAQPLSNQHETAMMSSDEDSMSRDSGICELMDENTPVCFSSMSTESTTVQVEECMEIDEDENLQPGPVSRRQKKVTFRREKSSCQVRLFDESPTSHKMFMRPQAPLSVRSENQQLLQQRKRKFEKSEQSSDHFHLEPMSVEAMDDDEIVMMDQNTTKWEPGFRAPNHKKGRLTRSATAFPSLETFEEEEHEEQHHLNVKYHLKTVAKESSKGFRRITAETLRDIFFRLSEKEFDDKYILIDCRYPYEYNRGHIKNAINHFDRVTVSKIFYDENGRKRCNKIPIFYCEFSQARGPKMAYALRQVDRELNVNHYPKCDYEEMYVLDLGYRNFFFAANEANITNLCQPHAYCEMHDKEHTMELKKYNFHNKGQSVLRTVSMSRSFKSLPTGSAFNFVASSASFTSAPSTSTENIDTNDDCQKSRTPAVPRIASRRNLFSDPSHSPTNFAQFPLTCSRETPSPHKHPLTCPRFS.

The span at 1–20 shows a compositional bias: polar residues; the sequence is MNRPSQISQDVAQPLSNQHE. The interval 1 to 35 is disordered; sequence MNRPSQISQDVAQPLSNQHETAMMSSDEDSMSRDS. In terms of domain architecture, Rhodanese spans 243-349; that stretch reads FDDKYILIDC…FFFAANEANI (107 aa). The interval 411–452 is disordered; that stretch reads TSAPSTSTENIDTNDDCQKSRTPAVPRIASRRNLFSDPSHSP.

This sequence belongs to the MPI phosphatase family.

The enzyme catalyses O-phospho-L-tyrosyl-[protein] + H2O = L-tyrosyl-[protein] + phosphate. Required for intestinal cell division following the 16E cell stage of embryogenesis. Regulates intestinal cell divisions and binucleations probably by modulating the activity of the cell cycle regulator wee-1.3 and by activating the cdk-1/cyb-1 complex. Plays a role in male tail development, via regulation of the cell divisions of the ray precursor cell lineages, perhaps acting together with cell cycle regulators cyl-1, cdk-1, cyb-3, and cyd-1. The sequence is that of M-phase inducer phosphatase cdc-25.2 from Caenorhabditis elegans.